We begin with the raw amino-acid sequence, 435 residues long: NADH-quinone oxidoreductase subunit D (435 aa).

The protein belongs to the complex I 49 kDa subunit family. As to quaternary structure, NDH-1 is composed of 14 different subunits. Subunits NuoB, C, D, E, F, and G constitute the peripheral sector of the complex.

The protein localises to the cell inner membrane. The catalysed reaction is a quinone + NADH + 5 H(+)(in) = a quinol + NAD(+) + 4 H(+)(out). In terms of biological role, NDH-1 shuttles electrons from NADH, via FMN and iron-sulfur (Fe-S) centers, to quinones in the respiratory chain. The immediate electron acceptor for the enzyme in this species is believed to be ubiquinone. Couples the redox reaction to proton translocation (for every two electrons transferred, four hydrogen ions are translocated across the cytoplasmic membrane), and thus conserves the redox energy in a proton gradient. This is NADH-quinone oxidoreductase subunit D from Xylella fastidiosa (strain 9a5c).